A 414-amino-acid chain; its full sequence is Putative competence-damage inducible protein (414 aa).

It belongs to the CinA family.

This Listeria monocytogenes serotype 4b (strain CLIP80459) protein is Putative competence-damage inducible protein.